Consider the following 225-residue polypeptide: MLTQQELKQQAADAALALIEPLLGPDVIIGVGTGSTADLFIDGLARYRDRLRGTVASSERSAARLAGHGITVLDLNDVTSMPVYVDGADEIDARLHMIKGGGGAQTREKIVASVADRYICIVDESKLVERLGSFPLPVEVIPMARQAVARALVALGGQPRLREGFTTDNGNIILDVAGLQIDDAPALELTVNNLPGVVTCGLFARPGADVALLATQNGIRRLERP.

Residues 33–36 (TGST), 86–89 (DGAD), and 99–102 (KGGG) each bind substrate. Glu-108 serves as the catalytic Proton acceptor. Residue Lys-126 coordinates substrate.

Belongs to the ribose 5-phosphate isomerase family. Homodimer.

It catalyses the reaction aldehydo-D-ribose 5-phosphate = D-ribulose 5-phosphate. Its pathway is carbohydrate degradation; pentose phosphate pathway; D-ribose 5-phosphate from D-ribulose 5-phosphate (non-oxidative stage): step 1/1. Catalyzes the reversible conversion of ribose-5-phosphate to ribulose 5-phosphate. In Bordetella petrii (strain ATCC BAA-461 / DSM 12804 / CCUG 43448), this protein is Ribose-5-phosphate isomerase A.